The following is a 208-amino-acid chain: MEAPPVTVMPVTGGTINMMEYLLQGSVLDQSLESLLHRLRGLCDNMEPESFADHELVYLLKGQQGNPFILRARRSLLDPSVPWHLRYLGQPEVGDKSRHALVRNCVDVAASHSLPDFLNEMGFRMDHEFVAKGQVFRKGVMKVVVSKLSRVLVPGNTDNTEPLSLSYLVELSVLAPAGQDTVSEDMRSFAEQLKPLVHLEKIDPKRLM.

It belongs to the Mediator complex subunit 18 family. In terms of assembly, component of the Mediator complex.

The protein localises to the nucleus. Component of the Mediator complex, a coactivator involved in the regulated transcription of nearly all RNA polymerase II-dependent genes. Mediator functions as a bridge to convey information from gene-specific regulatory proteins to the basal RNA polymerase II transcription machinery. Mediator is recruited to promoters by direct interactions with regulatory proteins and serves as a scaffold for the assembly of a functional preinitiation complex with RNA polymerase II and the general transcription factors. This chain is Mediator of RNA polymerase II transcription subunit 18 (med18), found in Danio rerio (Zebrafish).